The chain runs to 232 residues: Ribosomal RNA small subunit methyltransferase G (232 aa).

Residues Gly93, Leu98, 144–145 (VE), and Arg163 each bind S-adenosyl-L-methionine.

The protein belongs to the methyltransferase superfamily. RNA methyltransferase RsmG family.

The protein resides in the cytoplasm. It catalyses the reaction guanosine(527) in 16S rRNA + S-adenosyl-L-methionine = N(7)-methylguanosine(527) in 16S rRNA + S-adenosyl-L-homocysteine. Specifically methylates the N7 position of guanine in position 527 of 16S rRNA. The sequence is that of Ribosomal RNA small subunit methyltransferase G from Burkholderia pseudomallei (strain 1710b).